Consider the following 96-residue polypeptide: Aspartyl/glutamyl-tRNA(Asn/Gln) amidotransferase subunit C (96 aa).

It belongs to the GatC family. Heterotrimer of A, B and C subunits.

It catalyses the reaction L-glutamyl-tRNA(Gln) + L-glutamine + ATP + H2O = L-glutaminyl-tRNA(Gln) + L-glutamate + ADP + phosphate + H(+). The catalysed reaction is L-aspartyl-tRNA(Asn) + L-glutamine + ATP + H2O = L-asparaginyl-tRNA(Asn) + L-glutamate + ADP + phosphate + 2 H(+). Its function is as follows. Allows the formation of correctly charged Asn-tRNA(Asn) or Gln-tRNA(Gln) through the transamidation of misacylated Asp-tRNA(Asn) or Glu-tRNA(Gln) in organisms which lack either or both of asparaginyl-tRNA or glutaminyl-tRNA synthetases. The reaction takes place in the presence of glutamine and ATP through an activated phospho-Asp-tRNA(Asn) or phospho-Glu-tRNA(Gln). This Exiguobacterium sp. (strain ATCC BAA-1283 / AT1b) protein is Aspartyl/glutamyl-tRNA(Asn/Gln) amidotransferase subunit C.